The following is a 267-amino-acid chain: Membrane-spanning 4-domains subfamily A member 10 (267 aa).

Residues Met1–Gly61 lie on the Cytoplasmic side of the membrane. A helical membrane pass occupies residues Ala62–Val82. At Lys83–Lys91 the chain is on the extracellular side. The helical transmembrane segment at Ser92–Met112 threads the bilayer. At Lys113–Lys121 the chain is on the cytoplasmic side. The helical transmembrane segment at Met122–Ile142 threads the bilayer. Topologically, residues Ser143–Glu171 are extracellular. A helical transmembrane segment spans residues Leu172–Ala192. Topologically, residues Trp193 to Asn267 are cytoplasmic.

It belongs to the MS4A family.

Its subcellular location is the membrane. May be involved in signal transduction as a component of a multimeric receptor complex. The protein is Membrane-spanning 4-domains subfamily A member 10 (MS4A10) of Homo sapiens (Human).